A 393-amino-acid chain; its full sequence is MNLSATEKDLMIVNMGPHHPSMHGVLRLIVTLDGEDVVDCEPILGYLHRGMEKIAENRTIIQYLPYVTRWDYLATMFTEAITVNGPEQLGNIQVPKRASYIRVIMLELSRIASHLLWLGPFMADIGAQTPFFYIFRERELVYDLFEAATGMRMMHNYFRIGGVAADLPYGWLDKCLDFCDYFLTGIVEYQKLITRNPIFLERVEGIGVIGGEEAINWGLSGPMLRASGIKWDLRKVDHYECYDEFDWEIQWQKEGDSLARYLVRISEMTESIKIIQQALEGIPGGPYENLEIRCFDRERDPEWNDFEYRFISIKPSPTFELPRQELYARMEAPKGELGIFLIGDQSGFPWRWKIRPPGFINLQILPQLVKRMKLADIMTILGSIDIIMGEVDR.

This sequence belongs to the complex I 49 kDa subunit family. NDH is composed of at least 16 different subunits, 5 of which are encoded in the nucleus.

The protein resides in the plastid. It is found in the chloroplast thylakoid membrane. The enzyme catalyses a plastoquinone + NADH + (n+1) H(+)(in) = a plastoquinol + NAD(+) + n H(+)(out). The catalysed reaction is a plastoquinone + NADPH + (n+1) H(+)(in) = a plastoquinol + NADP(+) + n H(+)(out). Functionally, NDH shuttles electrons from NAD(P)H:plastoquinone, via FMN and iron-sulfur (Fe-S) centers, to quinones in the photosynthetic chain and possibly in a chloroplast respiratory chain. The immediate electron acceptor for the enzyme in this species is believed to be plastoquinone. Couples the redox reaction to proton translocation, and thus conserves the redox energy in a proton gradient. The protein is NAD(P)H-quinone oxidoreductase subunit H, chloroplastic of Gossypium barbadense (Sea Island cotton).